Here is a 596-residue protein sequence, read N- to C-terminus: Transcription factor IIIB 70 kDa subunit (596 aa).

Residues 1–33 (MPVCKNCHGTEFERDLSNANNDLVCKACGVVSE) form a TFIIB-type zinc finger. C4, C7, C25, and C28 together coordinate Zn(2+). 2 tandem repeats follow at residues 90-166 (VSYA…KMVK) and 185-264 (FAEK…EFKN). 2 disordered regions span residues 363 to 421 (GENI…NESG) and 509 to 534 (IATG…EPTK). Residues 365–375 (NIYHEGSENET) are compositionally biased toward basic and acidic residues. A phosphoserine mark is found at S381 and S384. The span at 388–421 (EHVEGEDKETEGTEEKVKKVKTKTSEEKKENESG) shows a compositional bias: basic and acidic residues. The span at 516–526 (VKKKRTRRRNN) shows a compositional bias: basic residues.

Belongs to the TFIIB family. TFIIIB comprises the TATA-binding protein (TBP), the B-related factor (BRF) and the B' component (TFC5).

Its subcellular location is the nucleus. Its function is as follows. General activator of RNA polymerase III transcription. Interacts with TBP. Binds to Pol III subunit C34 and to the TAU135 component of TFIIIC. In Saccharomyces cerevisiae (strain ATCC 204508 / S288c) (Baker's yeast), this protein is Transcription factor IIIB 70 kDa subunit (BRF1).